Consider the following 384-residue polypeptide: 8-amino-7-oxononanoate synthase (384 aa).

Arginine 21 provides a ligand contact to substrate. 108 to 109 (GF) is a binding site for pyridoxal 5'-phosphate. Histidine 133 is a binding site for substrate. Pyridoxal 5'-phosphate contacts are provided by serine 179, histidine 207, and threonine 233. Lysine 236 carries the N6-(pyridoxal phosphate)lysine modification. Threonine 352 contributes to the substrate binding site.

This sequence belongs to the class-II pyridoxal-phosphate-dependent aminotransferase family. BioF subfamily. In terms of assembly, homodimer. Pyridoxal 5'-phosphate serves as cofactor.

It carries out the reaction 6-carboxyhexanoyl-[ACP] + L-alanine + H(+) = (8S)-8-amino-7-oxononanoate + holo-[ACP] + CO2. The protein operates within cofactor biosynthesis; biotin biosynthesis. Functionally, catalyzes the decarboxylative condensation of pimeloyl-[acyl-carrier protein] and L-alanine to produce 8-amino-7-oxononanoate (AON), [acyl-carrier protein], and carbon dioxide. This is 8-amino-7-oxononanoate synthase from Shigella flexneri serotype 5b (strain 8401).